The primary structure comprises 384 residues: Succinyl-diaminopimelate desuccinylase (384 aa).

Zn(2+) is bound at residue His71. Asp73 is an active-site residue. Asp104 serves as a coordination point for Zn(2+). Glu138 acts as the Proton acceptor in catalysis. Positions 139, 167, and 357 each coordinate Zn(2+).

The protein belongs to the peptidase M20A family. DapE subfamily. In terms of assembly, homodimer. Requires Zn(2+) as cofactor. The cofactor is Co(2+).

It carries out the reaction N-succinyl-(2S,6S)-2,6-diaminopimelate + H2O = (2S,6S)-2,6-diaminopimelate + succinate. The protein operates within amino-acid biosynthesis; L-lysine biosynthesis via DAP pathway; LL-2,6-diaminopimelate from (S)-tetrahydrodipicolinate (succinylase route): step 3/3. Functionally, catalyzes the hydrolysis of N-succinyl-L,L-diaminopimelic acid (SDAP), forming succinate and LL-2,6-diaminopimelate (DAP), an intermediate involved in the bacterial biosynthesis of lysine and meso-diaminopimelic acid, an essential component of bacterial cell walls. The chain is Succinyl-diaminopimelate desuccinylase from Blochmanniella floridana.